Here is a 359-residue protein sequence, read N- to C-terminus: MAEYGAHITTASVADDQPSIFEVVAQDSLMTAVRPALQHVVKVLAESNPAHYGFLWRWFDEIFTLLDFLLQQHYLSRTSASFSEHFYGLKRIVAGSSPHLQRPASAGLPKEHLWKSAMFLVLLPYLKVKLEKLASSLREEDEYSIHPPSSRWKRFYRAFLAAYPFVNMAWEGWFLTQQLRYILGKAEHHSPLLKLAGVRLARLTAQDMQAIKQRLVEASAMQEPVRSVGEKIKSALKKAVGGVALSLSTGLSVGVFFLQFLDWWYSSENQEAIKSLTALPTPPPPVHLDYNSDSPLLPKMKTVCPLCRKTRVNDTVLATSGYVFCYRCVFNYVRSHQACPITGYPTEVQHLIKLYSPEN.

At 1-19 (MAEYGAHITTASVADDQPS) the chain is on the peroxisomal matrix side. Residues 20–47 (IFEVVAQDSLMTAVRPALQHVVKVLAES) form a helical membrane-spanning segment. Over 48 to 51 (NPAH) the chain is Cytoplasmic. A helical transmembrane segment spans residues 52–76 (YGFLWRWFDEIFTLLDFLLQQHYLS). Topologically, residues 77–109 (RTSASFSEHFYGLKRIVAGSSPHLQRPASAGLP) are peroxisomal matrix. Residues 110-139 (KEHLWKSAMFLVLLPYLKVKLEKLASSLRE) traverse the membrane as a helical segment. Topologically, residues 140–144 (EDEYS) are cytoplasmic. A helical transmembrane segment spans residues 145–183 (IHPPSSRWKRFYRAFLAAYPFVNMAWEGWFLTQQLRYIL). Residues 184–249 (GKAEHHSPLL…VGGVALSLST (66 aa)) lie on the Peroxisomal matrix side of the membrane. Residues 250–277 (GLSVGVFFLQFLDWWYSSENQEAIKSLT) traverse the membrane as a helical segment. Over 278 to 359 (ALPTPPPPVH…HLIKLYSPEN (82 aa)) the chain is Cytoplasmic. The Zn(2+) site is built by C304, C307, C325, and C328. An RING-type; degenerate zinc finger spans residues 304–343 (CPLCRKTRVNDTVLATSGYVFCYRCVFNYVRSHQACPITG).

The protein belongs to the pex2/pex10/pex12 family. In terms of assembly, component of the PEX2-PEX10-PEX12 retrotranslocation channel, composed of PEX2, PEX10 and PEX12. Interacts with PEX19 via its cytoplasmic domain.

It localises to the peroxisome membrane. It participates in protein modification; protein ubiquitination. Functionally, component of a retrotranslocation channel required for peroxisome organization by mediating export of the PEX5 receptor from peroxisomes to the cytosol, thereby promoting PEX5 recycling. The retrotranslocation channel is composed of PEX2, PEX10 and PEX12; each subunit contributing transmembrane segments that coassemble into an open channel that specifically allows the passage of PEX5 through the peroxisomal membrane. PEX12 also regulates PEX5 recycling by activating the E3 ubiquitin-protein ligase activity of PEX10. When PEX5 recycling is compromised, PEX12 stimulates PEX10-mediated polyubiquitination of PEX5, leading to its subsequent degradation. This is Peroxisome assembly protein 12 (Pex12) from Mus musculus (Mouse).